The sequence spans 301 residues: Acetylglutamate kinase (301 aa).

Residues 71 to 72, Arg-93, and Asn-198 each bind substrate; that span reads GG.

The protein belongs to the acetylglutamate kinase family. ArgB subfamily.

The protein localises to the cytoplasm. The catalysed reaction is N-acetyl-L-glutamate + ATP = N-acetyl-L-glutamyl 5-phosphate + ADP. It functions in the pathway amino-acid biosynthesis; L-arginine biosynthesis; N(2)-acetyl-L-ornithine from L-glutamate: step 2/4. Its function is as follows. Catalyzes the ATP-dependent phosphorylation of N-acetyl-L-glutamate. The chain is Acetylglutamate kinase from Zymomonas mobilis subsp. mobilis (strain ATCC 31821 / ZM4 / CP4).